A 435-amino-acid chain; its full sequence is Trigger factor (435 aa).

One can recognise a PPIase FKBP-type domain in the interval 163–248 (GELASVTFSA…VHAVKERKMP (86 aa)).

The protein belongs to the FKBP-type PPIase family. Tig subfamily.

Its subcellular location is the cytoplasm. The enzyme catalyses [protein]-peptidylproline (omega=180) = [protein]-peptidylproline (omega=0). Involved in protein export. Acts as a chaperone by maintaining the newly synthesized protein in an open conformation. Functions as a peptidyl-prolyl cis-trans isomerase. The chain is Trigger factor from Maridesulfovibrio salexigens (strain ATCC 14822 / DSM 2638 / NCIMB 8403 / VKM B-1763) (Desulfovibrio salexigens).